Here is a 248-residue protein sequence, read N- to C-terminus: Glutathione S-transferase omega-2 (248 aa).

A GST N-terminal domain is found at 22–101; that stretch reads GVIRIYSMRF…YLDDVFPGRK (80 aa). Cys32 acts as the Nucleophile in catalysis. Glutathione is bound by residues Lys59, Val72, and 85-86; that span reads ES. Positions 106–231 constitute a GST C-terminal domain; it reads DPYERARQKM…IFLGFLNLYF (126 aa).

It belongs to the GST superfamily. Omega family.

It carries out the reaction RX + glutathione = an S-substituted glutathione + a halide anion + H(+). It catalyses the reaction L-dehydroascorbate + 2 glutathione = glutathione disulfide + L-ascorbate. The enzyme catalyses methylarsonate + 2 glutathione + H(+) = methylarsonous acid + glutathione disulfide + H2O. Its function is as follows. Exhibits glutathione-dependent thiol transferase activity. Has high dehydroascorbate reductase activity and may contribute to the recycling of ascorbic acid. Participates in the biotransformation of inorganic arsenic and reduces monomethylarsonic acid (MMA). The polypeptide is Glutathione S-transferase omega-2 (Gsto2) (Rattus norvegicus (Rat)).